We begin with the raw amino-acid sequence, 450 residues long: Sorting nexin-4 (450 aa).

Methionine 1 carries the post-translational modification N-acetylmethionine. Residues 1-46 (MEQAPPDPERQLQPAPLEPLGSPDAGLGAAVGKEAEGAGEESSGVD) are disordered. Serine 22 bears the Phosphoserine mark. One can recognise a PX domain in the interval 61–187 (SVSEAEKRTG…YLFLTQEGNW (127 aa)). 4 residues coordinate a 1,2-diacyl-sn-glycero-3-phospho-(1D-myo-inositol-3-phosphate): arginine 106, serine 108, lysine 132, and arginine 154.

It belongs to the sorting nexin family. Heterodimer; heterodimerizes with SNX7 or SNX30. Interacts with WWC1/KIBRA. Identified in a complex with WWC1/KIBRA and dynein components DYNLL1 and DYNC1I2. Interacts with BIN1.

Its subcellular location is the early endosome membrane. In terms of biological role, involved in the regulation of endocytosis and in several stages of intracellular trafficking. Plays a role in recycling endocytosed transferrin receptor and prevent its degradation. Involved in autophagosome assembly by regulating trafficking and recycling of phospholipid scramblase ATG9A. This is Sorting nexin-4 from Homo sapiens (Human).